Here is a 355-residue protein sequence, read N- to C-terminus: Natterin-1 (355 aa).

A signal peptide spans 1–18; the sequence is MIPSVLLVTLLLLSWTSA. Positions 19–27 are excised as a propeptide; sequence EKDLKVRVA.

It belongs to the natterin family. Contains 4 disulfide bonds. In terms of tissue distribution, expressed by the venom gland.

The protein localises to the secreted. Inhibited by tissue-kallikrein inhibitor TKI and trasylol. Plasma kallikrein inhibitor PKSI527 and classical inhibitors of serine-, metallo-, thiol- or aspartate-peptidases evokes a minor inhibition of the peptide digestion. In terms of biological role, shows nociceptive, edema-inducing and kininogenase activity with release of kallidin from low molecular weight kininogen. The cleavage occurs at Met-Lys bonds. In Thalassophryne nattereri (Copper Joe toadfish), this protein is Natterin-1.